The following is a 473-amino-acid chain: Zinc finger and SCAN domain-containing protein 21 (473 aa).

Lysine 27 participates in a covalent cross-link: Glycyl lysine isopeptide (Lys-Gly) (interchain with G-Cter in SUMO2). The region spanning 45 to 127 is the SCAN box domain; sequence RQRFRQFGYH…TLLEDLEREL (83 aa). The disordered stretch occupies residues 127 to 171; the sequence is LDEPGHQVSTPPNEQKPVWEKISSSGTAKESPSSMQPQPLETSHN. Residues 148–171 are compositionally biased toward polar residues; it reads ISSSGTAKESPSSMQPQPLETSHN. Residues lysine 221 and lysine 232 each participate in a glycyl lysine isopeptide (Lys-Gly) (interchain with G-Cter in SUMO2) cross-link. The tract at residues 244–272 is disordered; the sequence is LENEKGTKPPLQEAGSKKGRESVPTKPTP. Positions 258–272 are enriched in basic and acidic residues; sequence GSKKGRESVPTKPTP. 7 consecutive C2H2-type zinc fingers follow at residues 277-299, 305-327, 333-354, 360-382, 388-410, 416-438, and 444-466; these read YICAECGKAFSNSSNLTKHRRTH, YVCTKCGKAFSHSSNLTLHYRTH, YDCKCGKAFGQSSDLLKHQRMH, YQCKDCGKAFSGKGSLIRHYRIH, YQCNECGKSFSQHAGLSSHQRLH, YKCKECGKAFNHSSNFNKHHRIH, and YWCHHCGKTFCSKSNLSKHQRVH. Residue lysine 349 forms a Glycyl lysine isopeptide (Lys-Gly) (interchain with G-Cter in SUMO2) linkage.

It belongs to the krueppel C2H2-type zinc-finger protein family.

The protein localises to the nucleus. Its function is as follows. Strong transcriptional activator. Plays an important role in spermatogenesis; essential for the progression of meiotic prophase I in spermatocytes. This is Zinc finger and SCAN domain-containing protein 21 (ZSCAN21) from Gorilla gorilla gorilla (Western lowland gorilla).